We begin with the raw amino-acid sequence, 372 residues long: Gibberellin 20 oxidase 1 (372 aa).

The Fe2OG dioxygenase domain occupies 209-309 (RNDSIMRLNY…RRSLAFFLCP (101 aa)). His-234, Asp-236, and His-290 together coordinate Fe cation. The active site involves Arg-300.

It belongs to the iron/ascorbate-dependent oxidoreductase family. GA20OX subfamily. The cofactor is Fe(2+). L-ascorbate serves as cofactor. As to expression, preferentially expressed in reproductive organs. Expressed in the epithelium of embryos and the tapetum of anthers. Expressed at low levels in the shoot apical meristem.

It catalyses the reaction gibberellin A12 + 2 2-oxoglutarate + 3 O2 + H(+) = gibberellin A9 + 2 succinate + 3 CO2 + 2 H2O. The catalysed reaction is gibberellin A53 + 2 2-oxoglutarate + 3 O2 + H(+) = gibberellin A20 + 2 succinate + 3 CO2 + 2 H2O. Its function is as follows. Key oxidase enzyme in the biosynthesis of gibberellin. Catalyzes the conversion of GA12 and GA53 to GA9 and GA20 respectively, via a three-step oxidation at C-20 of the GA skeleton. The protein is Gibberellin 20 oxidase 1 of Oryza sativa subsp. japonica (Rice).